A 400-amino-acid chain; its full sequence is Large envelope protein (400 aa).

M1 bears the N-acetylmethionine mark. The N-myristoyl glycine; by host moiety is linked to residue G2. Residues 2 to 119 form a pre-S1 region; sequence GGWSSKHRKG…PPLRDTHPQA (118 aa). The interval 2-174 is pre-S; the sequence is GGWSSKHRKG…FTKTGDPASN (173 aa). Residues 2-181 are Virion surface; in external conformation-facing; it reads GGWSSKHRKG…ASNMESTTSG (180 aa). The Intravirion; in internal conformation portion of the chain corresponds to 2 to 253; that stretch reads GGWSSKHRKG…PGYRWMCLRR (252 aa). N-linked (GlcNAc...) asparagine glycosylation is present at W4. The segment at 89-117 is disordered; the sequence is PAAPPPASTNRQSGRQPTPISPPLRDTHP. The span at 96-106 shows a compositional bias: polar residues; that stretch reads STNRQSGRQPT. A pre-S2 region spans residues 120 to 174; that stretch reads MQWNSTAFHQALQDPRVRGLYFPAGGSSSGTVNPVPNTVSHISSIFTKTGDPASN. A helical membrane pass occupies residues 182 to 202; that stretch reads FLGPLLVLQAGFFLLTRILTI. The Intravirion; in external conformation segment spans residues 203–253; the sequence is PQSLDSWWTSLNFLGGAPGCIGQNSQSQTSNHSPTSCPPTCPGYRWMCLRR. A helical transmembrane segment spans residues 254–274; it reads FIIFLFILLLCLIFLLVLLDY. Over 275–348 the chain is Virion surface; it reads QGMLPVCPLL…WASVRFSWLS (74 aa). A glycan (N-linked (GlcNAc...) asparagine; by host) is linked at N320. The chain crosses the membrane as a helical span at residues 349 to 369; sequence LLVPFVQWFAGLSPTVWLSVI. The Intravirion segment spans residues 370–375; it reads WMIWYW. Residues 376 to 398 form a helical membrane-spanning segment; sequence GPSLYNILSPFLPLLPIFLCLWV. The Virion surface portion of the chain corresponds to 399–400; the sequence is YI.

This sequence belongs to the orthohepadnavirus major surface antigen family. In terms of assembly, in its internal form (Li-HBsAg), interacts with the capsid protein and with the isoform S. Interacts with host chaperone CANX. Associates with host chaperone CANX through its pre-S2 N glycan; this association may be essential for isoform M proper secretion. As to quaternary structure, interacts with isoform L. Interacts with the antigens of satellite virus HDV (HDVAgs); this interaction is required for encapsidation of HDV genomic RNA. Post-translationally, isoform M is N-terminally acetylated by host at a ratio of 90%, and N-glycosylated by host at the pre-S2 region. Myristoylated.

The protein resides in the virion membrane. In terms of biological role, the large envelope protein exists in two topological conformations, one which is termed 'external' or Le-HBsAg and the other 'internal' or Li-HBsAg. In its external conformation the protein attaches the virus to cell receptors and thereby initiating infection. This interaction determines the species specificity and liver tropism. This attachment induces virion internalization predominantly through caveolin-mediated endocytosis. The large envelope protein also assures fusion between virion membrane and endosomal membrane. In its internal conformation the protein plays a role in virion morphogenesis and mediates the contact with the nucleocapsid like a matrix protein. The middle envelope protein plays an important role in the budding of the virion. It is involved in the induction of budding in a nucleocapsid independent way. In this process the majority of envelope proteins bud to form subviral lipoprotein particles of 22 nm of diameter that do not contain a nucleocapsid. This is Large envelope protein from Homo sapiens (Human).